The sequence spans 509 residues: Kynureninase 1 (509 aa).

Residues Leu154, Thr155, 183–186 (FPSD), Asp270, His273, and Tyr295 contribute to the pyridoxal 5'-phosphate site. Position 296 is an N6-(pyridoxal phosphate)lysine (Lys296). Residues Trp345 and Asn373 each coordinate pyridoxal 5'-phosphate.

It belongs to the kynureninase family. As to quaternary structure, homodimer. It depends on pyridoxal 5'-phosphate as a cofactor.

Its subcellular location is the cytoplasm. It carries out the reaction L-kynurenine + H2O = anthranilate + L-alanine + H(+). The catalysed reaction is 3-hydroxy-L-kynurenine + H2O = 3-hydroxyanthranilate + L-alanine + H(+). The protein operates within amino-acid degradation; L-kynurenine degradation; L-alanine and anthranilate from L-kynurenine: step 1/1. It participates in cofactor biosynthesis; NAD(+) biosynthesis; quinolinate from L-kynurenine: step 2/3. Functionally, catalyzes the cleavage of L-kynurenine (L-Kyn) and L-3-hydroxykynurenine (L-3OHKyn) into anthranilic acid (AA) and 3-hydroxyanthranilic acid (3-OHAA), respectively. This chain is Kynureninase 1, found in Chaetomium globosum (strain ATCC 6205 / CBS 148.51 / DSM 1962 / NBRC 6347 / NRRL 1970) (Soil fungus).